A 139-amino-acid polypeptide reads, in one-letter code: Sec-independent protein translocase protein TatB (139 aa).

Residues 1-21 (MFDMGFLELMLIGVVALLVLG) form a helical membrane-spanning segment. The span at 66-86 (QQRKLDAGLGKVRDEVERHGD) shows a compositional bias: basic and acidic residues. The interval 66 to 139 (QQRKLDAGLG…APSAKDSNAP (74 aa)) is disordered.

This sequence belongs to the TatB family. In terms of assembly, the Tat system comprises two distinct complexes: a TatABC complex, containing multiple copies of TatA, TatB and TatC subunits, and a separate TatA complex, containing only TatA subunits. Substrates initially bind to the TatABC complex, which probably triggers association of the separate TatA complex to form the active translocon.

The protein localises to the cell inner membrane. Its function is as follows. Part of the twin-arginine translocation (Tat) system that transports large folded proteins containing a characteristic twin-arginine motif in their signal peptide across membranes. Together with TatC, TatB is part of a receptor directly interacting with Tat signal peptides. TatB may form an oligomeric binding site that transiently accommodates folded Tat precursor proteins before their translocation. The polypeptide is Sec-independent protein translocase protein TatB (Chromohalobacter salexigens (strain ATCC BAA-138 / DSM 3043 / CIP 106854 / NCIMB 13768 / 1H11)).